The primary structure comprises 174 residues: Large ribosomal subunit protein uL16 (174 aa).

This sequence belongs to the universal ribosomal protein uL16 family.

The sequence is that of Large ribosomal subunit protein uL16 from Archaeoglobus fulgidus (strain ATCC 49558 / DSM 4304 / JCM 9628 / NBRC 100126 / VC-16).